A 160-amino-acid polypeptide reads, in one-letter code: Large ribosomal subunit protein uL22c (160 aa).

This sequence belongs to the universal ribosomal protein uL22 family. As to quaternary structure, part of the 50S ribosomal subunit.

Its subcellular location is the plastid. It localises to the chloroplast. In terms of biological role, this protein binds specifically to 23S rRNA. Its function is as follows. The globular domain of the protein is located near the polypeptide exit tunnel on the outside of the subunit, while an extended beta-hairpin is found that lines the wall of the exit tunnel in the center of the 70S ribosome. This Arabidopsis thaliana (Mouse-ear cress) protein is Large ribosomal subunit protein uL22c (rpl22).